The sequence spans 233 residues: Large ribosomal subunit protein uL1 (233 aa).

It belongs to the universal ribosomal protein uL1 family. In terms of assembly, part of the 50S ribosomal subunit.

Functionally, binds directly to 23S rRNA. The L1 stalk is quite mobile in the ribosome, and is involved in E site tRNA release. Protein L1 is also a translational repressor protein, it controls the translation of the L11 operon by binding to its mRNA. In Rhodospirillum rubrum (strain ATCC 11170 / ATH 1.1.1 / DSM 467 / LMG 4362 / NCIMB 8255 / S1), this protein is Large ribosomal subunit protein uL1.